The chain runs to 355 residues: Glucokinase (355 aa).

An ATP-binding site is contributed by 11–16 (GDIGGT).

The protein belongs to the bacterial glucokinase family.

The protein localises to the cytoplasm. The catalysed reaction is D-glucose + ATP = D-glucose 6-phosphate + ADP + H(+). The chain is Glucokinase from Synechocystis sp. (strain ATCC 27184 / PCC 6803 / Kazusa).